The primary structure comprises 4912 residues: Probable E3 ubiquitin-protein ligase HERC2 (4912 aa).

The tract at residues 1-67 is disordered; it reads MFNRQASGGA…GSGSAAPPSH (67 aa). The span at 8-17 shows a compositional bias: gly residues; that stretch reads GGAGSSGQGA. The segment covering 18–31 has biased composition (low complexity); it reads GSSQTASAAPVSAG. Composition is skewed to gly residues over residues 32–41 and 49–59; these read VGVGGGGGAS and SAAGSGSGSGS. 5 RCC1 repeats span residues 634–685, 686–739, 741–789, 791–843, and 844–897; these read NHNA…AITC, GGNL…ALTS, GLVF…ALSS, GQLY…ALSS, and SGEV…VWTQ. 3 disordered regions span residues 1102–1129, 1428–1475, and 1659–1681; these read RLSP…STSP, QLLQ…PGRG, and QEQE…EEET. The segment covering 1446 to 1458 has biased composition (polar residues); it reads SHSCHSTAGNTPT. Thr-1776 carries the phosphothreonine modification. An MIB/HERC2 domain is found at 1917 to 1990; it reads SGPDLAKLMK…QYDLQLADSA (74 aa). Disordered stretches follow at residues 1994–2018 and 2381–2412; these read ASPT…SHPS and GSIY…SGSG. A compositionally biased stretch (polar residues) spans 2396 to 2412; it reads ESQQPGEQDQQLSSGSG. The region spanning 2511 to 2557 is the UBA domain; it reads ATDAQLIGQIMEMGFTRRTVELALKQLSLQAEIMPTPEQIVQWILEH. The interval 2572–2620 is disordered; sequence LASSASSHDPEADSDNECPSSNSTTSSSTSSDTVEGQPMAVSGPAPPVK. Low complexity predominate over residues 2591–2604; sequence SSNSTTSSSTSSDT. Residues 2624-2699 form the CPH domain; the sequence is RKDFQTADLY…VCFVHIELVE (76 aa). Residues 2780 to 2958 form the DOC domain; the sequence is TSATLPSLGD…FLASEYSAGV (179 aa). 7 RCC1 repeats span residues 2985–3036, 3037–3090, 3091–3142, 3144–3194, 3197–3248, 3250–3300, and 3302–3352; these read PCTV…IVSQ, DGKV…ALTL, DGKV…AISS, GELY…TLAL, DGAV…ALTR, GEVW…AVTD, and GQVY…AWGL. 2 disordered regions span residues 3352 to 3374 and 3953 to 4000; these read LPNA…RDPL and LPSS…EQPD. Low complexity predominate over residues 3974–3988; that stretch reads LNSTTSLSSSTVSNV. RCC1 repeat units follow at residues 4049–4099, 4101–4153, 4155–4205, 4207–4259, 4261–4311, 4313–4363, and 4365–4415; these read STIY…AVTP, GKLF…ALTT, GEVY…AITA, GHVL…CITD, DNVW…ALTK, GAVY…ACSD, and GEVY…ALST. The 336-residue stretch at 4547-4882 folds into the HECT domain; sequence ALALPHRVWK…IHFCKSIDTD (336 aa). The active-site Glycyl thioester intermediate is Cys-4850. Positions 4891–4912 are disordered; it reads EPTEATGSEDNSDLESVASHEG.

It localises to the cytoplasm. The protein resides in the cytoskeleton. It is found in the microtubule organizing center. Its subcellular location is the centrosome. The protein localises to the centriole. The catalysed reaction is S-ubiquitinyl-[E2 ubiquitin-conjugating enzyme]-L-cysteine + [acceptor protein]-L-lysine = [E2 ubiquitin-conjugating enzyme]-L-cysteine + N(6)-ubiquitinyl-[acceptor protein]-L-lysine.. It participates in protein modification; protein ubiquitination. In terms of biological role, probable E3 ubiquitin-protein ligase which accepts ubiquitin from an E2 ubiquitin-conjugating enzyme in the form of a thioester and then directly transfers the ubiquitin to targeted substrates. The protein is Probable E3 ubiquitin-protein ligase HERC2 (HERC2) of Drosophila melanogaster (Fruit fly).